The primary structure comprises 295 residues: uncharacterized protein (295 aa).

This is an uncharacterized protein from Methanocaldococcus jannaschii (strain ATCC 43067 / DSM 2661 / JAL-1 / JCM 10045 / NBRC 100440) (Methanococcus jannaschii).